The sequence spans 173 residues: Peptide deformylase (173 aa).

Residues C98 and H140 each contribute to the Fe cation site. The active site involves E141. H144 provides a ligand contact to Fe cation.

It belongs to the polypeptide deformylase family. Fe(2+) serves as cofactor.

The enzyme catalyses N-terminal N-formyl-L-methionyl-[peptide] + H2O = N-terminal L-methionyl-[peptide] + formate. Removes the formyl group from the N-terminal Met of newly synthesized proteins. Requires at least a dipeptide for an efficient rate of reaction. N-terminal L-methionine is a prerequisite for activity but the enzyme has broad specificity at other positions. The protein is Peptide deformylase of Caulobacter sp. (strain K31).